Here is a 555-residue protein sequence, read N- to C-terminus: Formate--tetrahydrofolate ligase (555 aa).

65-72 (TPAGEGKT) lines the ATP pocket.

Belongs to the formate--tetrahydrofolate ligase family.

It carries out the reaction (6S)-5,6,7,8-tetrahydrofolate + formate + ATP = (6R)-10-formyltetrahydrofolate + ADP + phosphate. The protein operates within one-carbon metabolism; tetrahydrofolate interconversion. The protein is Formate--tetrahydrofolate ligase of Caldanaerobacter subterraneus subsp. tengcongensis (strain DSM 15242 / JCM 11007 / NBRC 100824 / MB4) (Thermoanaerobacter tengcongensis).